Reading from the N-terminus, the 261-residue chain is uncharacterized protein (261 aa).

This is an uncharacterized protein from Saccharomyces cerevisiae (strain ATCC 204508 / S288c) (Baker's yeast).